The primary structure comprises 483 residues: Cytochrome P450 71A23 (483 aa).

The helical transmembrane segment at methionine 1–histidine 21 threads the bilayer. Cysteine 429 serves as a coordination point for heme.

This sequence belongs to the cytochrome P450 family. Heme serves as cofactor.

The protein localises to the membrane. This Arabidopsis thaliana (Mouse-ear cress) protein is Cytochrome P450 71A23 (CYP71A23).